We begin with the raw amino-acid sequence, 209 residues long: Large ribosomal subunit protein uL3 (209 aa).

Residues 118-152 (GFQGAIKRHGQSRGPMSHGSRYHRRPGSMGPVDPN) form a disordered region.

The protein belongs to the universal ribosomal protein uL3 family. In terms of assembly, part of the 50S ribosomal subunit. Forms a cluster with proteins L14 and L19.

One of the primary rRNA binding proteins, it binds directly near the 3'-end of the 23S rRNA, where it nucleates assembly of the 50S subunit. The protein is Large ribosomal subunit protein uL3 of Bacillus licheniformis (strain ATCC 14580 / DSM 13 / JCM 2505 / CCUG 7422 / NBRC 12200 / NCIMB 9375 / NCTC 10341 / NRRL NRS-1264 / Gibson 46).